The sequence spans 373 residues: Cytoplasmic tRNA 2-thiolation protein 1 (373 aa).

The protein belongs to the TtcA family. CTU1/NCS6/ATPBD3 subfamily.

It is found in the cytoplasm. The protein operates within tRNA modification; 5-methoxycarbonylmethyl-2-thiouridine-tRNA biosynthesis. In terms of biological role, plays a central role in 2-thiolation of mcm(5)S(2)U at tRNA wobble positions of tRNA(Lys), tRNA(Glu) and tRNA(Gln). Directly binds tRNAs and probably acts by catalyzing adenylation of tRNAs, an intermediate required for 2-thiolation. It is unclear whether it acts as a sulfurtransferase that transfers sulfur from thiocarboxylated URM1 onto the uridine of tRNAs at wobble position. The sequence is that of Cytoplasmic tRNA 2-thiolation protein 1 from Caenorhabditis elegans.